A 220-amino-acid polypeptide reads, in one-letter code: Glycerol-3-phosphate acyltransferase (220 aa).

Transmembrane regions (helical) follow at residues 11-31 (INVIFTLLGYLIGGIPFGYAL), 70-90 (LLILILDLFKGMFAVFLSKLF), 96-116 (LQWMVAIASILGHCYSPFLNF), 127-147 (GSVVLLIPIESLIGLMVWFFV), 153-173 (ISSLASIVGVGTATILIFFVP), and 193-213 (MVLIFIFTLIKHVGNIFNLLA).

The protein belongs to the PlsY family. As to quaternary structure, probably interacts with PlsX.

The protein resides in the cell inner membrane. The catalysed reaction is an acyl phosphate + sn-glycerol 3-phosphate = a 1-acyl-sn-glycero-3-phosphate + phosphate. It participates in lipid metabolism; phospholipid metabolism. Catalyzes the transfer of an acyl group from acyl-phosphate (acyl-PO(4)) to glycerol-3-phosphate (G3P) to form lysophosphatidic acid (LPA). This enzyme utilizes acyl-phosphate as fatty acyl donor, but not acyl-CoA or acyl-ACP. The sequence is that of Glycerol-3-phosphate acyltransferase from Helicobacter acinonychis (strain Sheeba).